A 178-amino-acid polypeptide reads, in one-letter code: Caveolin-1 (178 aa).

Serine 2 bears the N-acetylserine mark. At serine 2 the chain carries Phosphoserine. Residues 2 to 94 (SGGKYVDSEG…WKASFTTFTV (93 aa)) form a required for homooligomerization region. The Cytoplasmic segment spans residues 2-104 (SGGKYVDSEG…TKYWFYRLLS (103 aa)). Lysine 5 carries the N6-acetyllysine; alternate modification. Lysine 5 participates in a covalent cross-link: Glycyl lysine isopeptide (Lys-Gly) (interchain with G-Cter in ubiquitin); alternate. Tyrosine 6 carries the post-translational modification Phosphotyrosine. The residue at position 9 (serine 9) is a Phosphoserine. A Phosphotyrosine; by ABL1 modification is found at tyrosine 14. Tyrosine 25 is modified (phosphotyrosine). Glycyl lysine isopeptide (Lys-Gly) (interchain with G-Cter in ubiquitin) cross-links involve residues lysine 26 and lysine 30. Serine 37 is subject to Phosphoserine. Residues lysine 39, lysine 47, and lysine 57 each participate in a glycyl lysine isopeptide (Lys-Gly) (interchain with G-Cter in ubiquitin) cross-link. The interval 82–94 (DGIWKASFTTFTV) is interaction with CAVIN3. The helical intramembrane region spans 105 to 125 (ALFGIPMALIWGIYFAILSFL). Residues 126–178 (HIWAVVPCIKSFLIEIQCISRVYSIYIHTVCDPLFEAIGKIFSNVRIGLQKEI) lie on the Cytoplasmic side of the membrane. The segment at 131–142 (VPCIKSFLIEIQ) is interacts with SPRY1, SPRY2, SPRY3 and SPRY4. Residues cysteine 133, cysteine 143, and cysteine 156 are each lipidated (S-palmitoyl cysteine). An interacts with SPRY1, SPRY2, and SPRY4 region spans residues 149–160 (SIYIHTVCDPLF). The tract at residues 167–178 (FSNVRIGLQKEI) is interacts with SPRY1, SPRY2, SPRY3 and SPRY4.

This sequence belongs to the caveolin family. In terms of assembly, homooligomer. Interacts with GLIPR2. Interacts with NOSTRIN. Interacts with SNAP25 and STX1A. Interacts (via the N-terminus) with DPP4; the interaction is direct. Interacts with CTNNB1, CDH1 and JUP. Interacts with PACSIN2; this interaction induces membrane tubulation. Interacts with SLC7A9. Interacts with BMX and BTK. Interacts with TGFBR1. Interacts with CAVIN3 (via leucine-zipper domain) in a cholesterol-sensitive manner. Interacts with CAVIN1. Interacts with EHD2 in a cholesterol-dependent manner. Forms a ternary complex with UBXN6 and VCP; mediates CAV1 targeting to lysosomes for degradation. Interacts with ABCG1; this interaction regulates ABCG1-mediated cholesterol efflux. Interacts with NEU3; this interaction enhances NEU3 sialidase activity within caveola. Interacts (via C-terminus) with SPRY1, SPRY2 (via C-terminus), SPRY3, and SPRY4. Interacts with IGFBP5; this interaction allows trafficking of IGFBP5 from the plasma membrane to the nucleus. Post-translationally, phosphorylated at Tyr-14 by ABL1 in response to oxidative stress. In terms of processing, ubiquitinated. Undergo monoubiquitination and multi- and/or polyubiquitination. Monoubiquitination of N-terminal lysines promotes integration in a ternary complex with UBXN6 and VCP which promotes oligomeric CAV1 targeting to lysosomes for degradation. Ubiquitinated by ZNRF1; leading to degradation and modulation of the TLR4-mediated immune response.

The protein localises to the golgi apparatus membrane. Its subcellular location is the cell membrane. The protein resides in the membrane. It localises to the caveola. It is found in the membrane raft. Its function is as follows. May act as a scaffolding protein within caveolar membranes. Forms a stable heterooligomeric complex with CAV2 that targets to lipid rafts and drives caveolae formation. Mediates the recruitment of CAVIN proteins (CAVIN1/2/3/4) to the caveolae. Interacts directly with G-protein alpha subunits and can functionally regulate their activity. Involved in the costimulatory signal essential for T-cell receptor (TCR)-mediated T-cell activation. Its binding to DPP4 induces T-cell proliferation and NF-kappa-B activation in a T-cell receptor/CD3-dependent manner. Recruits CTNNB1 to caveolar membranes and may regulate CTNNB1-mediated signaling through the Wnt pathway. Negatively regulates TGFB1-mediated activation of SMAD2/3 by mediating the internalization of TGFBR1 from membrane rafts leading to its subsequent degradation. Binds 20(S)-hydroxycholesterol (20(S)-OHC). In Saimiri boliviensis boliviensis (Bolivian squirrel monkey), this protein is Caveolin-1 (CAV1).